We begin with the raw amino-acid sequence, 382 residues long: Galactokinase (382 aa).

34–37 (EHTD) serves as a coordination point for substrate. ATP is bound at residue 124-130 (GAGLSSS). Mg(2+) is bound by residues Ser130 and Glu162. Residue Asp174 is the Proton acceptor of the active site. Tyr223 is a binding site for substrate.

The protein belongs to the GHMP kinase family. GalK subfamily.

It localises to the cytoplasm. The enzyme catalyses alpha-D-galactose + ATP = alpha-D-galactose 1-phosphate + ADP + H(+). It functions in the pathway carbohydrate metabolism; galactose metabolism. In terms of biological role, catalyzes the transfer of the gamma-phosphate of ATP to D-galactose to form alpha-D-galactose-1-phosphate (Gal-1-P). The polypeptide is Galactokinase (Escherichia coli (strain SMS-3-5 / SECEC)).